Consider the following 479-residue polypeptide: Probable periplasmic serine endoprotease DegP-like (479 aa).

The signal sequence occupies residues 1–27 (MSIPRMKSYFSLIAAVLMLGQVATAQA). Positions 77–99 (LERSMPPGSRPPGAGKGDRQRET) are disordered. Residues H119, D149, and S222 each act as charge relay system in the active site. Residues 220–222 (GNS) and 277–281 (LGVVI) contribute to the substrate site. PDZ domains follow at residues 266 to 357 (LKAS…IRDG) and 363 to 468 (TVTV…LRQG).

The protein belongs to the peptidase S1C family.

The protein localises to the periplasm. It carries out the reaction Acts on substrates that are at least partially unfolded. The cleavage site P1 residue is normally between a pair of hydrophobic residues, such as Val-|-Val.. Functionally, might be efficient in the degradation of transiently denatured and unfolded proteins which accumulate in the periplasm following stress conditions. The sequence is that of Probable periplasmic serine endoprotease DegP-like (mucD) from Pseudomonas savastanoi pv. phaseolicola (strain 1448A / Race 6) (Pseudomonas syringae pv. phaseolicola (strain 1448A / Race 6)).